We begin with the raw amino-acid sequence, 371 residues long: Anhydro-N-acetylmuramic acid kinase (371 aa).

12 to 19 (GTSADGID) contacts ATP.

Belongs to the anhydro-N-acetylmuramic acid kinase family.

The catalysed reaction is 1,6-anhydro-N-acetyl-beta-muramate + ATP + H2O = N-acetyl-D-muramate 6-phosphate + ADP + H(+). Its pathway is amino-sugar metabolism; 1,6-anhydro-N-acetylmuramate degradation. It participates in cell wall biogenesis; peptidoglycan recycling. Catalyzes the specific phosphorylation of 1,6-anhydro-N-acetylmuramic acid (anhMurNAc) with the simultaneous cleavage of the 1,6-anhydro ring, generating MurNAc-6-P. Is required for the utilization of anhMurNAc either imported from the medium or derived from its own cell wall murein, and thus plays a role in cell wall recycling. In Saccharophagus degradans (strain 2-40 / ATCC 43961 / DSM 17024), this protein is Anhydro-N-acetylmuramic acid kinase.